We begin with the raw amino-acid sequence, 421 residues long: Fasciclin-like arabinogalactan protein ARB_02922 (421 aa).

Positions 1–17 (MLLYYILVALWATVTYA) are cleaved as a signal peptide. FAS1 domains lie at 18 to 167 (KSFS…DRPL) and 169 to 296 (LPQS…SDVL). N-linked (GlcNAc...) asparagine glycans are attached at residues N52, N75, N80, N120, N145, N181, N223, and N300. The interval 300-401 (NDTAKPVPNA…NTPQPGAAAT (102 aa)) is disordered. Gly residues-rich tracts occupy residues 344-356 (TSGG…GGGE) and 372-387 (SGGG…GGPG). Residues 388–401 (PTATNTPQPGAAAT) show a composition bias toward low complexity. G397 is lipidated: GPI-anchor amidated glycine. The propeptide at 398 to 421 (AAATERAKAGLAAVVGLGVVLINA) is removed in mature form.

The protein belongs to the fasciclin-like AGP family.

Its subcellular location is the cell membrane. Functionally, may be a cell surface adhesion protein. This Arthroderma benhamiae (strain ATCC MYA-4681 / CBS 112371) (Trichophyton mentagrophytes) protein is Fasciclin-like arabinogalactan protein ARB_02922.